The primary structure comprises 399 residues: Methylthioribose kinase (399 aa).

ATP-binding positions include asparagine 40, lysine 57, and glutamate 111–leucine 113. Aspartate 229 is a binding site for substrate. Aspartate 246–glutamate 248 serves as a coordination point for ATP. Position 344 (arginine 344) interacts with substrate.

This sequence belongs to the methylthioribose kinase family. As to quaternary structure, homodimer.

It carries out the reaction 5-(methylsulfanyl)-D-ribose + ATP = 5-(methylsulfanyl)-alpha-D-ribose 1-phosphate + ADP + H(+). It participates in amino-acid biosynthesis; L-methionine biosynthesis via salvage pathway; S-methyl-5-thio-alpha-D-ribose 1-phosphate from S-methyl-5'-thioadenosine (hydrolase route): step 2/2. In terms of biological role, catalyzes the phosphorylation of methylthioribose into methylthioribose-1-phosphate. This chain is Methylthioribose kinase, found in Klebsiella pneumoniae (strain 342).